Reading from the N-terminus, the 817-residue chain is DNA replication licensing factor Mcm6 (817 aa).

The C4-type zinc-finger motif lies at 152-179; that stretch reads CLDCQTEIRNVEQQFKFTNPTICRNPVC. The MCM domain occupies 338–544; it reads LYQNLISSLF…VVDYAIARKI (207 aa). Ser391, Thr392, Ala393, Lys394, Ser395, and Asn496 together coordinate ATP. Positions 520–523 match the Arginine finger motif; that stretch reads SRFD. 2 residues coordinate ADP: Arg611 and Glu614.

This sequence belongs to the MCM family. In terms of assembly, component of the Mcm2-7 complex. The complex forms a toroidal hexameric ring with the proposed subunit order Mcm2-Mcm6-Mcm4-Mcm7-Mcm3-Mcm5. The heterodimers of Mcm4/Mcm6 and Mcm3/Mcm5 interact with Mcm2 and Mcm7. In stage 12 embryos, strongly expressed in the CNS and weakly in the gut.

Its subcellular location is the nucleus. It carries out the reaction ATP + H2O = ADP + phosphate + H(+). In terms of biological role, acts as a component of the Mcm2-7 complex (Mcm complex) which is the putative replicative helicase essential for 'once per cell cycle' DNA replication initiation and elongation in eukaryotic cells. Core component of CDC45-MCM-GINS (CMG) helicase, the molecular machine that unwinds template DNA during replication, and around which the replisome is built. The active ATPase sites in the Mcm2-7 ring are formed through the interaction surfaces of two neighboring subunits such that a critical structure of a conserved arginine finger motif is provided in trans relative to the ATP-binding site of the Walker A box of the adjacent subunit. The six ATPase active sites, however, are likely to contribute differentially to the complex helicase activity Required for DNA replication and cell proliferation. Required for mitotic cycles, endocycles, and the special S phase associated with the amplification of chorion genes; has a role in origin unwinding or fork elongation at chorion loci. The sequence is that of DNA replication licensing factor Mcm6 from Drosophila melanogaster (Fruit fly).